Here is a 192-residue protein sequence, read N- to C-terminus: Imidazole glycerol phosphate synthase subunit HisH (192 aa).

The Glutamine amidotransferase type-1 domain maps to 1-192 (MIVIVDYGLG…QAIQGGFIND (192 aa)). Catalysis depends on Cys77, which acts as the Nucleophile. Active-site residues include His169 and Glu171.

In terms of assembly, heterodimer of HisH and HisF.

The protein localises to the cytoplasm. It catalyses the reaction 5-[(5-phospho-1-deoxy-D-ribulos-1-ylimino)methylamino]-1-(5-phospho-beta-D-ribosyl)imidazole-4-carboxamide + L-glutamine = D-erythro-1-(imidazol-4-yl)glycerol 3-phosphate + 5-amino-1-(5-phospho-beta-D-ribosyl)imidazole-4-carboxamide + L-glutamate + H(+). The enzyme catalyses L-glutamine + H2O = L-glutamate + NH4(+). It functions in the pathway amino-acid biosynthesis; L-histidine biosynthesis; L-histidine from 5-phospho-alpha-D-ribose 1-diphosphate: step 5/9. Its function is as follows. IGPS catalyzes the conversion of PRFAR and glutamine to IGP, AICAR and glutamate. The HisH subunit catalyzes the hydrolysis of glutamine to glutamate and ammonia as part of the synthesis of IGP and AICAR. The resulting ammonia molecule is channeled to the active site of HisF. This is Imidazole glycerol phosphate synthase subunit HisH from Staphylococcus aureus (strain COL).